The chain runs to 635 residues: Sulfite reductase [ferredoxin], chloroplastic (635 aa).

The transit peptide at 1–50 directs the protein to the chloroplast; that stretch reads MSGAIGGAEVHGFRGAAAQLPRSRVLGRPIRVAPPAAARPGGASAGSIRA. Disordered regions lie at residues 31-50 and 245-267; these read RVAPPAAARPGGASAGSIRA and PEVTKARNDNSHGTNFPDSPEPI. Basic and acidic residues predominate over residues 245–254; it reads PEVTKARNDN. Positions 494, 500, 540, and 544 each coordinate [4Fe-4S] cluster. Residue C544 participates in siroheme binding.

It belongs to the nitrite and sulfite reductase 4Fe-4S domain family. As to quaternary structure, monomer. Interacts with ferredoxin. Siroheme is required as a cofactor. The cofactor is [4Fe-4S] cluster. In terms of processing, phosphorylated; this phosphorylation reduces DNA-binding. In terms of tissue distribution, present in roots and leaves (at protein level). In leaves, sulfite reductase activity is detected in both bundle sheath and mesophyll cell types.

Its subcellular location is the plastid. It is found in the chloroplast stroma. It localises to the chloroplast nucleoid. The protein resides in the plastid stroma. The enzyme catalyses hydrogen sulfide + 6 oxidized [2Fe-2S]-[ferredoxin] + 3 H2O = sulfite + 6 reduced [2Fe-2S]-[ferredoxin] + 7 H(+). Inhibited by the tryptophan-modifying reagent, N-bromosuccinimide (NBS), by the lysine-modifying reagent, N-acetylsuccinimide and by the arginine-modifying reagent, phenylglyoxal. Complex formation with ferredoxin prevents these inhibitions. Essential protein with sulfite reductase activity required in assimilatory sulfate reduction pathway during both primary and secondary metabolism and thus involved in development and growth. Its function is as follows. DNA-binding protein that binds to both double-stranded and single-stranded DNA without significant sequence specificity to reversibly repress the transcriptional activity of chloroplast nucleoids by promoting DNA compaction and possibly regulate DNA replication. In Zea mays (Maize), this protein is Sulfite reductase [ferredoxin], chloroplastic (SIR).